A 245-amino-acid polypeptide reads, in one-letter code: ATP synthase subunit b (245 aa).

Residues 3-23 (SFNLLTIVSSIVNLLALAWII) traverse the membrane as a helical segment.

It belongs to the ATPase B chain family. As to quaternary structure, F-type ATPases have 2 components, F(1) - the catalytic core - and F(0) - the membrane proton channel. F(1) has five subunits: alpha(3), beta(3), gamma(1), delta(1), epsilon(1). F(0) has three main subunits: a(1), b(2) and c(10-14). The alpha and beta chains form an alternating ring which encloses part of the gamma chain. F(1) is attached to F(0) by a central stalk formed by the gamma and epsilon chains, while a peripheral stalk is formed by the delta and b chains.

It localises to the cell inner membrane. Functionally, f(1)F(0) ATP synthase produces ATP from ADP in the presence of a proton or sodium gradient. F-type ATPases consist of two structural domains, F(1) containing the extramembraneous catalytic core and F(0) containing the membrane proton channel, linked together by a central stalk and a peripheral stalk. During catalysis, ATP synthesis in the catalytic domain of F(1) is coupled via a rotary mechanism of the central stalk subunits to proton translocation. In terms of biological role, component of the F(0) channel, it forms part of the peripheral stalk, linking F(1) to F(0). This chain is ATP synthase subunit b, found in Dictyoglomus thermophilum (strain ATCC 35947 / DSM 3960 / H-6-12).